Reading from the N-terminus, the 773-residue chain is Probable serine/threonine-protein kinase MARK-C (773 aa).

The segment covering M1–N27 has biased composition (polar residues). A disordered region spans residues M1–I32. Residues Y46–T300 form the Protein kinase domain. Residues L52–V60 and K75 contribute to the ATP site. Residue D171 is the Proton acceptor of the active site. A coiled-coil region spans residues R362 to N390. Disordered regions lie at residues K382 to S445, D462 to I487, and Y558 to R588. The span at D405–Q443 shows a compositional bias: low complexity. Positions S445–S474 form a coiled coil. Residues S468–R478 show a composition bias toward polar residues. A compositionally biased stretch (low complexity) spans Q561 to Q573. The KA1 domain maps to C724–L773.

The protein belongs to the protein kinase superfamily. CAMK Ser/Thr protein kinase family. SNF1 subfamily.

It carries out the reaction L-seryl-[protein] + ATP = O-phospho-L-seryl-[protein] + ADP + H(+). It catalyses the reaction L-threonyl-[protein] + ATP = O-phospho-L-threonyl-[protein] + ADP + H(+). In Dictyostelium discoideum (Social amoeba), this protein is Probable serine/threonine-protein kinase MARK-C (mrkC).